Here is a 368-residue protein sequence, read N- to C-terminus: 2-aminoethylphosphonate--pyruvate transaminase (368 aa).

N6-(pyridoxal phosphate)lysine is present on Lys192.

It belongs to the class-V pyridoxal-phosphate-dependent aminotransferase family. PhnW subfamily. Homodimer. It depends on pyridoxal 5'-phosphate as a cofactor.

It carries out the reaction (2-aminoethyl)phosphonate + pyruvate = phosphonoacetaldehyde + L-alanine. Functionally, involved in phosphonate degradation. This Pseudomonas putida (strain GB-1) protein is 2-aminoethylphosphonate--pyruvate transaminase.